A 54-amino-acid chain; its full sequence is H-bracotoxin-Cf4 (54 aa).

Residues 1–21 (MSKLFIFFLLVALLAFVSSEA) form the signal peptide. Intrachain disulfides connect cysteine 24/cysteine 39, cysteine 31/cysteine 43, and cysteine 38/cysteine 53.

In terms of tissue distribution, expressed by the venom duct.

The protein resides in the secreted. This endoparasitoid wasp peptide has a role in disruption of the cellular host immune response, since it reduces the capacity of D.saccharalis hemocytes to encapsulate foreign bodies. On the other hand, it shows no effect on the humoral immune response, since it has no effect on phenoloxidase activity. The chain is H-bracotoxin-Cf4 from Cotesia flavipes (Parasitic wasp).